Consider the following 290-residue polypeptide: UPF0046 protein K07C11.7 (290 aa).

Residues 1–22 (MFHFSIGTVLISICWLAQWMEA) form the signal peptide. Asparagine 204 is a glycosylation site (N-linked (GlcNAc...) asparagine).

This sequence belongs to the UPF0046 family.

The polypeptide is UPF0046 protein K07C11.7 (Caenorhabditis elegans).